The chain runs to 126 residues: Adenosine 5'-monophosphoramidase HINT1 (126 aa).

Position 2 is an N-acetylalanine (alanine 2). The 109-residue stretch at 18-126 folds into the HIT domain; sequence IFGKIIRKEI…GGRQMNWPPG (109 aa). Residues lysine 21 and lysine 30 each carry the N6-acetyllysine modification. 43–44 contacts AMP; the sequence is DI. A phosphoserine mark is found at serine 45 and serine 72. AMP-binding positions include asparagine 99, 105–107, and 112–114; these read GQS and HLH. Residues 110–114 carry the Histidine triad motif motif; sequence HVHLH. The active-site Tele-AMP-histidine intermediate is histidine 112.

Belongs to the HINT family. As to quaternary structure, homodimer. Interacts with CDK7. Interacts with RUVBL1 and RUVBL2 and is associated with the LEF1/TCF1-CTNNB1 complex and with a KAT5 histone acetyltransferase complex. Identified in a complex with MITF and CTNNB1. Interacts with CDC34 and RBX1, and is part of a SCF (SKP2-CUL1-F-box protein) E3 ubiquitin-protein ligase complex. Interacts with SUMO1, SUMO2 and RGS17. Interacts with the Ten-1 ICD form of TENM1. Interacts with CALM1; interaction increases in the presence of calcium ions. In terms of tissue distribution, widely expressed.

Its subcellular location is the cytoplasm. It is found in the nucleus. The catalysed reaction is adenosine 5'-phosphoramidate + H2O = AMP + NH4(+). Its function is as follows. Exhibits adenosine 5'-monophosphoramidase activity, hydrolyzing purine nucleotide phosphoramidates with a single phosphate group such as adenosine 5'monophosphoramidate (AMP-NH2) to yield AMP and NH2. Hydrolyzes adenosine 5'monophosphomorpholidate (AMP-morpholidate) and guanosine 5'monophosphomorpholidate (GMP-morpholidate). Hydrolyzes lysyl-AMP (AMP-N-epsilon-(N-alpha-acetyl lysine methyl ester)) generated by lysine tRNA ligase. Hydrolyzes Met-AMP, His-AMP, Asp-AMP, lysyl-GMP (GMP-N-epsilon-(N-alpha-acetyl lysine methyl ester)) and AMP-N-alanine methyl ester. Can also convert adenosine 5'-O-phosphorothioate and guanosine 5'-O-phosphorothioate to the corresponding nucleoside 5'-O-phosphates with concomitant release of hydrogen sulfide. In addition, functions as a scaffolding protein that modulates transcriptional activation by the LEF1/TCF1-CTNNB1 complex and by the complex formed with MITF and CTNNB1. Modulates p53/TP53 levels and p53/TP53-mediated apoptosis. Modulates proteasomal degradation of target proteins by the SCF (SKP2-CUL1-F-box protein) E3 ubiquitin-protein ligase complex. Also exhibits SUMO-specific isopeptidase activity, deconjugating SUMO1 from RANGAP1 and RGS17. This is Adenosine 5'-monophosphoramidase HINT1 (HINT1) from Oryctolagus cuniculus (Rabbit).